We begin with the raw amino-acid sequence, 195 residues long: 3-isopropylmalate dehydratase small subunit (195 aa).

Belongs to the LeuD family. LeuD type 1 subfamily. As to quaternary structure, heterodimer of LeuC and LeuD.

It catalyses the reaction (2R,3S)-3-isopropylmalate = (2S)-2-isopropylmalate. It functions in the pathway amino-acid biosynthesis; L-leucine biosynthesis; L-leucine from 3-methyl-2-oxobutanoate: step 2/4. Its function is as follows. Catalyzes the isomerization between 2-isopropylmalate and 3-isopropylmalate, via the formation of 2-isopropylmaleate. In Corynebacterium kroppenstedtii (strain DSM 44385 / JCM 11950 / CIP 105744 / CCUG 35717), this protein is 3-isopropylmalate dehydratase small subunit.